Reading from the N-terminus, the 125-residue chain is Methylglyoxal synthase (125 aa).

The MGS-like domain maps to 1–125; sequence MTQRLRIALI…TAEKLVRALD (125 aa). Residues His-12, Lys-16, 38–41, and 59–60 contribute to the substrate site; these read TGTT and SG. Asp-65 acts as the Proton donor/acceptor in catalysis. A substrate-binding site is contributed by His-92.

It belongs to the methylglyoxal synthase family.

The catalysed reaction is dihydroxyacetone phosphate = methylglyoxal + phosphate. Catalyzes the formation of methylglyoxal from dihydroxyacetone phosphate. This is Methylglyoxal synthase from Brucella abortus (strain S19).